We begin with the raw amino-acid sequence, 695 residues long: RING finger protein 145 (695 aa).

13 helical membrane-spanning segments follow: residues 53-73 (YLAL…LTLP), 77-97 (LAKL…HQIS), 123-143 (FITA…VMKT), 146-166 (IWLF…VPIE), 168-188 (IVVI…YFLA), 225-245 (LVVP…QIYT), 275-295 (YSLL…LTLC), 316-336 (TEGV…LQVV), 340-360 (FLLS…MLEI), 384-404 (SLCL…CQFF), 410-430 (LLII…TLFI), 460-480 (LLEF…TVFG), and 482-502 (WTVM…WLRA). An RING-type; atypical zinc finger spans residues 537-575 (CSICYQDMNSAVITPCSHFFHPGCLKKWLYVQETCPLCH). The segment covering 585-603 (ATGESGSSTNPVSEQSATN) has biased composition (polar residues). A disordered region spans residues 585–610 (ATGESGSSTNPVSEQSATNPPLGPVS).

It is found in the membrane. The polypeptide is RING finger protein 145 (rnf145) (Xenopus tropicalis (Western clawed frog)).